Consider the following 2156-residue polypeptide: MAM and LDL-receptor class A domain-containing protein 1 (2156 aa).

The first 31 residues, 1 to 31, serve as a signal peptide directing secretion; it reads MLFFLDRMLAFPMNETFCCLWIACVFNSTLA. The Vesicular portion of the chain corresponds to 32–2076; that stretch reads QQGTESFQCD…FTYAQNNTWT (2045 aa). The 36-residue stretch at 33 to 68 folds into the LDL-receptor class A 1 domain; the sequence is QGTESFQCDNGVSLPPDSICDFTDQCGDSSDERHCL. 2 disulfide bridges follow: cysteine 40–cysteine 58 and cysteine 52–cysteine 67. MAM domains lie at 71-229 and 268-427; these read ERCD…GCLP and QACG…ACGQ. In terms of domain architecture, LDL-receptor class A 2 spans 433-471; the sequence is LCSADEFPCTSGQCIAKESVCDSRQDCSDESDEDPATCS. 3 disulfide bridges follow: cysteine 434/cysteine 446, cysteine 441/cysteine 459, and cysteine 453/cysteine 470. MAM domains lie at 474–637 and 652–816; these read LTCD…ECEI and SKCD…NCTL. A glycan (N-linked (GlcNAc...) asparagine) is linked at asparagine 813. One can recognise an LDL-receptor class A 3 domain in the interval 822 to 860; that stretch reads SCEGLDHFWCRHTRACIEKLRLCDLVDDCGDRTDEVNCA. Cystine bridges form between cysteine 823-cysteine 837, cysteine 831-cysteine 850, and cysteine 844-cysteine 859. In terms of domain architecture, MAM 5 spans 863–1024; sequence LQCNFETGIC…DDLSFMDCTL (162 aa). Asparagine 1049 carries N-linked (GlcNAc...) asparagine glycosylation. The LDL-receptor class A 4 domain maps to 1049 to 1086; it reads NCTDNEFICRSDGHCIEKMQKCDFKYDCPDKSDEASCV. 3 cysteine pairs are disulfide-bonded: cysteine 1050–cysteine 1063, cysteine 1057–cysteine 1076, and cysteine 1070–cysteine 1085. In terms of domain architecture, MAM 6 spans 1088-1256; that stretch reads EVCSFEKRSL…DDISFQDCSP (169 aa). A glycan (N-linked (GlcNAc...) asparagine) is linked at asparagine 1199. The LDL-receptor class A 5 domain occupies 1263-1301; it reads KCTDHEFMCANKHCIAKDKLCDFVNDCADNSDETTFICR. Disulfide bonds link cysteine 1264/cysteine 1276, cysteine 1271/cysteine 1289, and cysteine 1283/cysteine 1300. The MAM 7 domain occupies 1305–1465; that stretch reads GRCDFEFDLC…DIVLTENCLS (161 aa). Asparagine 1414 is a glycosylation site (N-linked (GlcNAc...) asparagine). The LDL-receptor class A 6 domain occupies 1482–1518; the sequence is FCPLGYRECHNGKCYRLEQSCNFVDNCGDNTDENECG. 3 disulfides stabilise this stretch: cysteine 1483–cysteine 1495, cysteine 1490–cysteine 1508, and cysteine 1502–cysteine 1517. The MAM 8 domain maps to 1519–1676; that stretch reads SSCTFEKGWC…DDIEFKNCTT (158 aa). The region spanning 1683-1720 is the LDL-receptor class A 7 domain; sequence LCPEITDFLCRDKKCIASHLLCDYKPDCSDRSDEAHCA. Cystine bridges form between cysteine 1684-cysteine 1697, cysteine 1692-cysteine 1710, and cysteine 1704-cysteine 1719. One can recognise an MAM 9 domain in the interval 1727–1892; it reads GSCNFETSSG…DISFTPECVT (166 aa). 3 consecutive LDL-receptor class A domains span residues 1902 to 1939, 1946 to 1982, and 1985 to 2023; these read PCEA…MDCP, LCSN…LICS, and SCSN…SSCS. 12 disulfide bridges follow: cysteine 1903-cysteine 1916, cysteine 1910-cysteine 1929, cysteine 1923-cysteine 1938, cysteine 1947-cysteine 1959, cysteine 1954-cysteine 1972, cysteine 1966-cysteine 1981, cysteine 1986-cysteine 1999, cysteine 1993-cysteine 2012, cysteine 2006-cysteine 2022, cysteine 2025-cysteine 2036, cysteine 2030-cysteine 2045, and cysteine 2047-cysteine 2056. Residues 2024 to 2057 enclose the EGF-like domain; the sequence is ECPLNYCRNGGTCVVEKNGPMCRCRQGWKGNRCH. The helical transmembrane segment at 2077–2097 threads the bilayer; the sequence is LLGIGLAFLMTHITVAVLCFL. At 2098 to 2156 the chain is on the cytoplasmic side; it reads ANRKVPIRKTEGSGNCAFVNPVYGNWSNPEKTESSVYSFSNPLYGTTSGSLETLSHHLK.

Interacts with FGF19. Strongly expressed in the small intestine.

It localises to the cytoplasmic vesicle membrane. Its function is as follows. Enhances production and/or transport of FGF19 and thus has a role in regulation of bile acid synthesis. This is MAM and LDL-receptor class A domain-containing protein 1 from Homo sapiens (Human).